Reading from the N-terminus, the 164-residue chain is Peptidyl-prolyl cis-trans isomerase A (164 aa).

Position 1 is an N-acetylmethionine (methionine 1). Valine 2 bears the N-acetylvaline; in Peptidyl-prolyl cis-trans isomerase A, N-terminally processed mark. Positions phenylalanine 7 to glutamine 163 constitute a PPIase cyclophilin-type domain. Lysine 28 carries the N6-acetyllysine; alternate modification. Residue lysine 28 forms a Glycyl lysine isopeptide (Lys-Gly) (interchain with G-Cter in SUMO2); alternate linkage. Lysine 28 is covalently cross-linked (Glycyl lysine isopeptide (Lys-Gly) (interchain with G-Cter in ubiquitin); alternate). N6-acetyllysine is present on lysine 44. The residue at position 77 (serine 77) is a Phosphoserine. The residue at position 82 (lysine 82) is an N6-acetyllysine; alternate. Lysine 82 participates in a covalent cross-link: Glycyl lysine isopeptide (Lys-Gly) (interchain with G-Cter in SUMO2); alternate. Position 93 is a phosphothreonine (threonine 93). A glycan (N-linked (GlcNAc...) asparagine) is linked at asparagine 108. N6-acetyllysine occurs at positions 125, 131, and 133.

The protein belongs to the cyclophilin-type PPIase family. PPIase A subfamily. In terms of assembly, interacts with protein phosphatase PPP3CA/calcineurin A. Interacts with PRPF19 isoform 2 (via N-terminus). Interacts with isoform 2 of BSG/CD147. Interacts with FOXO1; the interaction promotes FOXO1 dephosphorylation, nuclear accumulation and transcriptional activity. Interacts with integrin ITGA2B:ITGB3; the interaction is ROS and peptidyl-prolyl cis-trans isomerase (PPIase) activity-dependent and is increased in the presence of thrombin. Interacts with MAP3K5. Interacts with TARDBP; the interaction is dependent on the RNA-binding activity of TARDBP and the PPIase activity of PPIA/CYPA and the acetylation of PPIA/CYPA at Lys-125 favors the interaction. Interacts with HNRNPA1, HNRNPA2B1, HNRNPC, RBMX, HNRNPK and HNRNPM. Acetylation at Lys-125 markedly inhibits catalysis of cis to trans isomerization. PPIA acetylation also antagonizes the immunosuppressive effects of cyclosporine by inhibiting the sequential steps of cyclosporine binding and calcineurin inhibition. Acetylation at Lys-125 favors the interaction with TARDBP.

The protein resides in the cytoplasm. It localises to the secreted. It is found in the nucleus. It carries out the reaction [protein]-peptidylproline (omega=180) = [protein]-peptidylproline (omega=0). Its activity is regulated as follows. Binds cyclosporin A (CsA). CsA mediates some of its effects via an inhibitory action on PPIase. Catalyzes the cis-trans isomerization of proline imidic peptide bonds in oligopeptides. Exerts a strong chemotactic effect on leukocytes partly through activation of one of its membrane receptors BSG/CD147, initiating a signaling cascade that culminates in MAPK/ERK activation. Activates endothelial cells (ECs) in a proinflammatory manner by stimulating activation of NF-kappa-B and ERK, JNK and p38 MAP-kinases and by inducing expression of adhesion molecules including SELE and VCAM1. Induces apoptosis in ECs by promoting the FOXO1-dependent expression of CCL2 and BCL2L11 which are involved in EC chemotaxis and apoptosis. In response to oxidative stress, initiates proapoptotic and antiapoptotic signaling in ECs via activation of NF-kappa-B and AKT1 and up-regulation of antiapoptotic protein BCL2. Negatively regulates MAP3K5/ASK1 kinase activity, autophosphorylation and oxidative stress-induced apoptosis mediated by MAP3K5/ASK1. Necessary for the assembly of TARDBP in heterogeneous nuclear ribonucleoprotein (hnRNP) complexes and regulates TARDBP binding to RNA UG repeats and TARDBP-dependent expression of HDAC6, ATG7 and VCP which are involved in clearance of protein aggregates. Plays an important role in platelet activation and aggregation. Regulates calcium mobilization and integrin ITGA2B:ITGB3 bidirectional signaling via increased ROS production as well as by facilitating the interaction between integrin and the cell cytoskeleton. Binds heparan sulfate glycosaminoglycans. The sequence is that of Peptidyl-prolyl cis-trans isomerase A (PPIA) from Cricetulus griseus (Chinese hamster).